We begin with the raw amino-acid sequence, 620 residues long: Sodium-dependent dopamine transporter (620 aa).

The Cytoplasmic segment spans residues 1-56 (MSKSKCSVGLMSSVVAPAKEPNAMGPKEVELILVKEQNGVQLTSSTLTNPRQSPVE). Residues 57–95 (AQDRETWGKKIDFLLSVIGFAVDLANVWRFPYLCYKNGG) traverse the membrane as a discontinuously helical segment. The Na(+) site is built by Gly75, Ala77, Val78, Asp79, and Asn82. Asp79 serves as a coordination point for dopamine. 2 consecutive transmembrane segments (helical) span residues 96 to 127 (GAFL…NREG) and 128 to 171 (AAGV…FSSF). Residues Ser149 and Gly153 each coordinate dopamine. Residues 172–236 (TTELPWIHCN…SHGIDDLGPP (65 aa)) are Extracellular-facing. A disulfide bond links Cys180 and Cys189. Asn181, Asn188, and Asn205 each carry an N-linked (GlcNAc...) asparagine glycan. Helical transmembrane passes span 237–256 (RWQL…FSLW) and 257–287 (KGVK…GVTL). The Extracellular segment spans residues 288 to 306 (PGAIDGIRAYLSVDFYRLC). The discontinuously helical transmembrane segment at 307 to 335 (EASVWIDAATQVCFSLGVGFGVLIAFSSY) threads the bilayer. Gln317 is a chloride binding site. Phe320 is a dopamine binding site. Residues Ser321 and Asn353 each contribute to the Na(+) site. Ser321 is a chloride binding site. A helical membrane pass occupies residues 336–376 (NKFTNNCYRDAIVTTSINSLTSFSSGFVVFSFLGYMAQKHS). Chloride is bound at residue Ser357. Residues 377–400 (VPIGDVAKDGPGLIFIIYPEAIAT) are Extracellular-facing. 3 consecutive transmembrane segments (helical) span residues 401 to 442 (LPLS…QLLH), 443 to 466 (RHRE…CVTN), and 467 to 499 (GGIY…AWFY). The Na(+) site is built by Leu418, Asp421, and Ser422. Dopamine contacts are provided by Ser422 and Ala423. The Cytoplasmic segment spans residues 500–516 (GVGQFSDDIQQMTGQRP). Residues 517-542 (SLYWRLCWKLVSPCFLLFVVVVSIVT) form a helical membrane-spanning segment. Topologically, residues 543-553 (FRPPHYGAYIF) are extracellular. Residues 554 to 583 (PDWANALGWVIATSSMAMVPIYAAYKFCSL) form a helical membrane-spanning segment. Residues 561 to 590 (GWVIATSSMAMVPIYAAYKFCSLPGSFREK) are interaction with TGFB1I1. The Cytoplasmic segment spans residues 584–620 (PGSFREKLAYAIAPEKDRELVDRGEVRQFTLRHWLKV).

This sequence belongs to the sodium:neurotransmitter symporter (SNF) (TC 2.A.22) family. SLC6A3 subfamily. Monomer. Homooligomer; disulfide-linked. Interacts with PRKCABP and TGFB1I1. Interacts (via N-terminus) with SYNGR3 (via N-terminus). Interacts with SLC18A2. Interacts with TOR1A (ATP-bound); TOR1A regulates SLC6A3 subcellular location. Interacts with alpha-synuclein/SNCA. Interacts with SEPTIN4.

The protein localises to the cell membrane. It is found in the cell projection. It localises to the neuron projection. Its subcellular location is the axon. The catalysed reaction is dopamine(out) + chloride(out) + Na(+)(out) = dopamine(in) + chloride(in) + Na(+)(in). It catalyses the reaction (R)-noradrenaline(out) + chloride(out) + Na(+)(out) = (R)-noradrenaline(in) + chloride(in) + Na(+)(in). The enzyme catalyses dopamine(out) + chloride(out) + 2 Na(+)(out) = dopamine(in) + chloride(in) + 2 Na(+)(in). Inhibited by zinc ions. Its function is as follows. Mediates sodium- and chloride-dependent transport of dopamine. Also mediates sodium- and chloride-dependent transport of norepinephrine (also known as noradrenaline). Regulator of light-dependent retinal hyaloid vessel regression, downstream of OPN5 signaling. In Macaca fascicularis (Crab-eating macaque), this protein is Sodium-dependent dopamine transporter (SLC6A3).